The chain runs to 500 residues: MIRFKKTKLIASIAMALCLFSQPVISFSKDITDKNQSIDSGISSLSYNRNEVLASNGDKIESFVPKEGKKTGNKFIVVERQKRSLTTSPVDISIIDSVNDRTYPGALQLADKAFVENRPTILMVKRKPININIDLPGLKGENSIKVDDPTYGKVSGAIDELVSKWNEKYSSTHTLPARTQYSESMVYSKSQISSALNVNAKVLENSLGVDFNAVANNEKKVMILAYKQIFYTVSADLPKNPSDLFDDSVTFNDLKQKGVSNEAPPLMVSNVAYGRTIYVKLETTSSSKDVQAAFKALIKNTDIKNSQQYKDIYENSSFTAVVLGGDAQEHNKVVTKDFDEIRKVIKDNATFSTKNPAYPISYTSVFLKDNSVAAVHNKTDYIETTSTEYSKGKINLDHSGAYVAQFEVAWDEVSYDKEGNEVLTHKTWDGNYQDKTAHYSTVIPLEANARNIRIKARECTGLAWEWWRDVISEYDVPLTNNINVSIWGTTLYPGSSITYN.

An N-terminal signal peptide occupies residues 1–28; that stretch reads MIRFKKTKLIASIAMALCLFSQPVISFS. The next 4 membrane-spanning stretches (beta stranded) occupy residues 189–202, 209–218, 287–296, and 304–316; these read KSQISSALNVNAKV, VDFNAVANNE, SKDVQAAFKA, and KNSQQYKDIYENS. A Conserved undecapeptide motif is present at residues 458–468; that stretch reads ECTGLAWEWWR. The Cholesterol binding motif lies at 490-491; that stretch reads TL.

The protein belongs to the cholesterol-dependent cytolysin family. In terms of assembly, modeling based on cryo-EM shows a homooligomeric pore complex containing 38-44 subunits; when inserted in the host membrane.

It is found in the secreted. The protein localises to the host cell membrane. In terms of biological role, a cholesterol-dependent toxin that causes cytolysis by forming pores in cholesterol-containing host membranes. After binding to target membranes, the protein assembles into a pre-pore complex. A major conformational change leads to insertion in the host membrane and formation of an oligomeric pore complex. Cholesterol is required for binding to host cell membranes, membrane insertion and pore formation; cholesterol binding is mediated by a Thr-Leu pair in the C-terminus. Can be reversibly inactivated by oxidation. The sequence is that of Perfringolysin O (pfo) from Clostridium perfringens (strain 13 / Type A).